A 202-amino-acid chain; its full sequence is T-cell surface glycoprotein CD3 epsilon chain (202 aa).

The N-terminal stretch at 1–21 (MPSGSLWRVLGLCLLSVGAWG) is a signal peptide. At 22-125 (QEDNEDPLEP…NCVEVDTMTA (104 aa)) the chain is on the extracellular side. An Ig-like domain is found at 33–107 (PQTSASARYK…TSNSLEKNYL (75 aa)). Residues cysteine 54 and cysteine 96 are joined by a disulfide bond. The helical transmembrane segment at 126–146 (VAIVVADVCITLGFLLLVYYW) threads the bilayer. Over 147–202 (SKNKKASSVTMMRGPGAGGRPRGQNKEKPPPVPNPDYEPIRKGQQDLYSGLNQRGI) the chain is Cytoplasmic. A disordered region spans residues 156–202 (TMMRGPGAGGRPRGQNKEKPPPVPNPDYEPIRKGQQDLYSGLNQRGI). The segment at 170-187 (QNKEKPPPVPNPDYEPIR) is NUMB-binding region. The ITAM domain occupies 173-200 (EKPPPVPNPDYEPIRKGQQDLYSGLNQR). A proline-rich sequence region spans residues 174 to 181 (KPPPVPNP). A phosphotyrosine mark is found at tyrosine 183 and tyrosine 194. Over residues 192 to 202 (DLYSGLNQRGI) the composition is skewed to polar residues.

The TCR-CD3 complex is composed of a CD3D/CD3E and a CD3G/CD3E heterodimers that preferentially associate with TCRalpha and TCRbeta, respectively, to form TCRalpha/CD3E/CD3G and TCRbeta/CD3G/CD3E trimers. In turn, the hexamer interacts with CD3Z homodimer to form the TCR-CD3 complex. Alternatively, TCRalpha and TCRbeta can be replaced by TCRgamma and TCRdelta. Interacts with CD6. Interacts (via Proline-rich sequence) with NCK1; the interaction is ligand dependent but independent of tyrosine kinase activation. Phosphorylated on Tyr residues after T-cell receptor triggering by LCK in association with CD4/CD8.

It localises to the cell membrane. Part of the TCR-CD3 complex present on T-lymphocyte cell surface that plays an essential role in adaptive immune response. When antigen presenting cells (APCs) activate T-cell receptor (TCR), TCR-mediated signals are transmitted across the cell membrane by the CD3 chains CD3D, CD3E, CD3G and CD3Z. All CD3 chains contain immunoreceptor tyrosine-based activation motifs (ITAMs) in their cytoplasmic domain. Upon TCR engagement, these motifs become phosphorylated by Src family protein tyrosine kinases LCK and FYN, resulting in the activation of downstream signaling pathways. In addition of this role of signal transduction in T-cell activation, CD3E plays an essential role in correct T-cell development. Also participates in internalization and cell surface down-regulation of TCR-CD3 complexes via endocytosis sequences present in CD3E cytosolic region. In addition to its role as a TCR coreceptor, it serves as a receptor for ITPRIPL1. Ligand recognition inhibits T-cell activation by promoting interaction with NCK1, which prevents CD3E-ZAP70 interaction and blocks the ERK-NFkB signaling cascade and calcium influx. In Felis catus (Cat), this protein is T-cell surface glycoprotein CD3 epsilon chain (CD3E).